A 126-amino-acid chain; its full sequence is Small ribosomal subunit protein uS11 (126 aa).

It belongs to the universal ribosomal protein uS11 family. In terms of assembly, part of the 30S ribosomal subunit.

Functionally, located on the platform of the 30S subunit. This is Small ribosomal subunit protein uS11 from Methanosarcina barkeri (strain Fusaro / DSM 804).